A 403-amino-acid chain; its full sequence is S-adenosylmethionine synthase (403 aa).

An ATP-binding site is contributed by histidine 15. Residue aspartate 17 participates in Mg(2+) binding. Glutamate 43 is a K(+) binding site. The L-methionine site is built by glutamate 56 and glutamine 99. A flexible loop region spans residues 99–109 (QSPHIAQGVDR). ATP contacts are provided by residues 166 to 168 (DAK), 232 to 233 (KF), aspartate 241, 247 to 248 (RK), alanine 264, and lysine 268. Aspartate 241 lines the L-methionine pocket. Position 272 (lysine 272) interacts with L-methionine.

Belongs to the AdoMet synthase family. Homotetramer; dimer of dimers. The cofactor is Mg(2+). K(+) serves as cofactor.

It is found in the cytoplasm. It catalyses the reaction L-methionine + ATP + H2O = S-adenosyl-L-methionine + phosphate + diphosphate. It functions in the pathway amino-acid biosynthesis; S-adenosyl-L-methionine biosynthesis; S-adenosyl-L-methionine from L-methionine: step 1/1. Catalyzes the formation of S-adenosylmethionine (AdoMet) from methionine and ATP. The overall synthetic reaction is composed of two sequential steps, AdoMet formation and the subsequent tripolyphosphate hydrolysis which occurs prior to release of AdoMet from the enzyme. In Stenotrophomonas maltophilia (strain R551-3), this protein is S-adenosylmethionine synthase.